The following is a 445-amino-acid chain: T-box transcription factor TBX20 (445 aa).

The segment at residues 108 to 287 (LWDKFHELGT…SNPFAKGFRD (180 aa)) is a DNA-binding region (T-box). Residues 318 to 337 (EEDVLGEESQTTQSRGSAFT) are disordered. The span at 325–337 (ESQTTQSRGSAFT) shows a compositional bias: polar residues.

Prominently expressed in the extraembryonic mesoderm, developing heart, eye analage and motor neurons of hindbrain and spinal cord. Expressed in extraembryonic tissues such as the amnion and allantois.

Its subcellular location is the nucleus. In terms of biological role, acts as a transcriptional activator and repressor required for cardiac development and may have key roles in the maintenance of functional and structural phenotypes in adult heart. The polypeptide is T-box transcription factor TBX20 (Tbx20) (Mus musculus (Mouse)).